A 156-amino-acid polypeptide reads, in one-letter code: Arginine repressor (156 aa).

Belongs to the ArgR family.

It is found in the cytoplasm. The protein operates within amino-acid biosynthesis; L-arginine biosynthesis [regulation]. In terms of biological role, regulates arginine biosynthesis genes. The protein is Arginine repressor of Pectobacterium atrosepticum (strain SCRI 1043 / ATCC BAA-672) (Erwinia carotovora subsp. atroseptica).